The sequence spans 376 residues: uncharacterized protein (376 aa).

Belongs to the YCR102c/YLR460c/YNL134c family.

This is an uncharacterized protein from Saccharomyces cerevisiae (strain ATCC 204508 / S288c) (Baker's yeast).